The following is a 247-amino-acid chain: Cytochrome c oxidase subunit 2 (247 aa).

Residues 1-38 lie on the Mitochondrial intermembrane side of the membrane; sequence MREMMMNNMLNDVPTPWAMYFQDSATPNMEGMMELHNN. Residues 39-55 traverse the membrane as a helical segment; that stretch reads VLFYLCVMLGFVTYMLY. Residues 56–86 are Mitochondrial matrix-facing; sequence NVMTVYNKSAMAYKYMNHGQFMEMMWTTFPA. A helical transmembrane segment spans residues 87–103; that stretch reads MMLLMMAFPSFMLLYMC. The Mitochondrial intermembrane portion of the chain corresponds to 104–247; sequence DEVMAPAMTI…VDFLAWIDEQ (144 aa). 6 residues coordinate Cu cation: His182, Cys217, Glu219, Cys221, His225, and Met228. Residue Glu219 participates in Mg(2+) binding.

This sequence belongs to the cytochrome c oxidase subunit 2 family. As to quaternary structure, component of the cytochrome c oxidase (complex IV, CIV), a multisubunit enzyme composed of a catalytic core of 3 subunits and several supernumerary subunits. The complex exists as a monomer or a dimer and forms supercomplexes (SCs) in the inner mitochondrial membrane with ubiquinol-cytochrome c oxidoreductase (cytochrome b-c1 complex, complex III, CIII). Cu cation is required as a cofactor.

It localises to the mitochondrion inner membrane. The catalysed reaction is 4 Fe(II)-[cytochrome c] + O2 + 8 H(+)(in) = 4 Fe(III)-[cytochrome c] + 2 H2O + 4 H(+)(out). Component of the cytochrome c oxidase, the last enzyme in the mitochondrial electron transport chain which drives oxidative phosphorylation. The respiratory chain contains 3 multisubunit complexes succinate dehydrogenase (complex II, CII), ubiquinol-cytochrome c oxidoreductase (cytochrome b-c1 complex, complex III, CIII) and cytochrome c oxidase (complex IV, CIV), that cooperate to transfer electrons derived from NADH and succinate to molecular oxygen, creating an electrochemical gradient over the inner membrane that drives transmembrane transport and the ATP synthase. Cytochrome c oxidase is the component of the respiratory chain that catalyzes the reduction of oxygen to water. Electrons originating from reduced cytochrome c in the intermembrane space (IMS) are transferred via the dinuclear copper A center (CU(A)) of subunit 2 and heme A of subunit 1 to the active site in subunit 1, a binuclear center (BNC) formed by heme A3 and copper B (CU(B)). The BNC reduces molecular oxygen to 2 water molecules using 4 electrons from cytochrome c in the IMS and 4 protons from the mitochondrial matrix. This chain is Cytochrome c oxidase subunit 2 (COX2), found in Eeniella nana (Yeast).